The sequence spans 113 residues: Iron-sulfur cluster insertion protein ErpA (113 aa).

Residues Cys41, Cys105, and Cys107 each coordinate iron-sulfur cluster.

The protein belongs to the HesB/IscA family. In terms of assembly, homodimer. The cofactor is iron-sulfur cluster.

Required for insertion of 4Fe-4S clusters for at least IspG. The chain is Iron-sulfur cluster insertion protein ErpA from Vibrio vulnificus (strain YJ016).